A 638-amino-acid chain; its full sequence is Chaperone protein HtpG (638 aa).

Positions 1–343 are a; substrate-binding; it reads MTSTIDSDGA…SADLPLNISR (343 aa). A b region spans residues 344–557; it reads EMIQESPILA…ESGPDRQLEK (214 aa). The interval 558–638 is c; sequence ILVGVGQLTG…VERGLRGSTA (81 aa).

This sequence belongs to the heat shock protein 90 family. In terms of assembly, homodimer.

It localises to the cytoplasm. Molecular chaperone. Has ATPase activity. The sequence is that of Chaperone protein HtpG from Nitrobacter hamburgensis (strain DSM 10229 / NCIMB 13809 / X14).